Consider the following 71-residue polypeptide: Brevinin-1V (71 aa).

Positions 1–22 are cleaved as a signal peptide; the sequence is MFTLKKSLLLLFFLGTINLSLC. The propeptide occupies 23 to 45; that stretch reads EQERDADEEERRDDSEERDIEVE. A disulfide bridge connects residues cysteine 65 and cysteine 71.

Belongs to the frog skin active peptide (FSAP) family. Brevinin subfamily. Expressed by the skin glands.

The protein resides in the secreted. Its function is as follows. Has antimicrobial activity against Gram-positive bacteria and fungi but has weak or no activity against a range of Gram-negative bacteria except P.faecalis. Active against the Gram-positive bacteria E.faecium 091299 (MIC=37.5 uM), S.aureus ATCC 25923 (MIC=2.4 uM), S.carnosus KHS (MIC=19 uM), B.licheniformis X39 (MIC=2.4 uM) and R.rhodochrous X15 (MIC=1.2 uM) and a lower activity against E.faecalis 981 (MIC=75 uM). Active against the Gram-negative bacterium P.faecalis X29 (MIC=9.5 uM) is virtually inactive against E.coli ATCC 25922 (MIC=150 uM), and inactive against P.aeruginosa and S.typhi. Has antifungal activity against C.albicans ATCC 2002 (MIC=9.5 uM) and is also active against the slime mold 090223 (MIC=1.2 uM). Has low hemolytic activity against human erythrocytes (LC(50)=75 uM). The protein is Brevinin-1V of Odorrana hainanensis (Odor frog).